The primary structure comprises 313 residues: Alpha-S1-casein (313 aa).

An N-terminal signal peptide occupies residues 1 to 15 (MKLLILTCLVAAAFA). The span at 77 to 96 (ASEEQAMASAQEDSSISSSS) shows a compositional bias: low complexity. Positions 77–111 (ASEEQAMASAQEDSSISSSSEESEEAIPNITEQKN) are disordered. Ser90, Ser91, Ser93, Ser94, Ser95, and Ser96 each carry phosphoserine. 15 consecutive repeat copies span residues 135–140 (LLQKAS), 141–146 (LAKQAS), 147–152 (LFQQPS), 153–158 (LVQQAS), 159–164 (LFQQPS), 165–170 (LLQQAS), 171–176 (LFQQPS), 177–182 (MAQQAS), 183–188 (LLQQLL), 189–194 (LAQQPS), 195–200 (LALQVS), 201–206 (PAQQSS), 207–212 (LVQQAF), 213–218 (LAQQAS), and 219–224 (LAQKHH). Positions 135 to 224 (LLQKASLAKQ…QQASLAQKHH (90 aa)) are 15 X 6 AA tandem repeats.

The protein belongs to the alpha-casein family. As to expression, mammary gland specific. Secreted in milk.

The protein localises to the secreted. Important role in the capacity of milk to transport calcium phosphate. This is Alpha-S1-casein (Csn1s1) from Mus musculus (Mouse).